Reading from the N-terminus, the 403-residue chain is S-adenosylmethionine synthase (403 aa).

140 to 145 provides a ligand contact to ATP; the sequence is GKGSTD.

This sequence belongs to the AdoMet synthase 2 family. Mg(2+) serves as cofactor.

The catalysed reaction is L-methionine + ATP + H2O = S-adenosyl-L-methionine + phosphate + diphosphate. It participates in amino-acid biosynthesis; S-adenosyl-L-methionine biosynthesis; S-adenosyl-L-methionine from L-methionine: step 1/1. In terms of biological role, catalyzes the formation of S-adenosylmethionine from methionine and ATP. The sequence is that of S-adenosylmethionine synthase from Sulfolobus acidocaldarius (strain ATCC 33909 / DSM 639 / JCM 8929 / NBRC 15157 / NCIMB 11770).